Consider the following 216-residue polypeptide: Sugar fermentation stimulation protein homolog (216 aa).

The protein belongs to the SfsA family.

The polypeptide is Sugar fermentation stimulation protein homolog (Thermoplasma volcanium (strain ATCC 51530 / DSM 4299 / JCM 9571 / NBRC 15438 / GSS1)).